The sequence spans 254 residues: Adenosine 5'-phosphosulfate reductase (254 aa).

Residues Cys131, Cys132, Cys212, and Cys215 each coordinate [4Fe-4S] cluster. The active-site Nucleophile; cysteine thiosulfonate intermediate is Cys238.

It belongs to the PAPS reductase family. CysH subfamily. The cofactor is [4Fe-4S] cluster.

It is found in the cytoplasm. It catalyses the reaction [thioredoxin]-disulfide + sulfite + AMP + 2 H(+) = adenosine 5'-phosphosulfate + [thioredoxin]-dithiol. It participates in sulfur metabolism; hydrogen sulfide biosynthesis; sulfite from sulfate. Functionally, catalyzes the formation of sulfite from adenosine 5'-phosphosulfate (APS) using thioredoxin as an electron donor. The chain is Adenosine 5'-phosphosulfate reductase from Mesorhizobium japonicum (strain LMG 29417 / CECT 9101 / MAFF 303099) (Mesorhizobium loti (strain MAFF 303099)).